Consider the following 174-residue polypeptide: 2-hydroxy-palmitic acid dioxygenase MPO1 (174 aa).

The Cytoplasmic segment spans residues 1–23; it reads MGEGLLDLRSQLGFYKFYHHNPK. The chain crosses the membrane as a helical span at residues 24–44; that stretch reads NVLIHSIFVPTILFSGSCMLH. The Lumenal portion of the chain corresponds to 45–63; the sequence is RVKIYQSISLTAVLSVLFS. A helical transmembrane segment spans residues 64 to 84; sequence IFYCLLYLPTGLLAGVLLLLL. At 85-98 the chain is on the cytoplasmic side; that stretch reads NLALIDHRVDLTFK. A helical transmembrane segment spans residues 99-119; it reads QELGLFTIGWIFQFVGHGVFE. Over 120–131 the chain is Lumenal; sequence KRRPALIDNLVQ. A helical transmembrane segment spans residues 132 to 152; sequence SLVLAPYFIMFEFLFKLGFMP. Residues 153 to 174 lie on the Cytoplasmic side of the membrane; it reads RLKATLEHDLEIKQRNLRMQRQ.

The protein belongs to the MPO1 family. It depends on Fe(2+) as a cofactor.

It is found in the endoplasmic reticulum membrane. It catalyses the reaction (R)-2-hydroxyhexadecanoate + O2 = pentadecanoate + CO2 + H2O. Dioxygenase that catalyzes the alpha-oxidation of 2-hydroxy fatty acids in an iron-dependent manner. Involved in metabolism of phytosphingosine and is required for proper endoplasmic reticulum stress response. The chain is 2-hydroxy-palmitic acid dioxygenase MPO1 from Saccharomyces cerevisiae (strain ATCC 204508 / S288c) (Baker's yeast).